Reading from the N-terminus, the 422-residue chain is BTB/POZ domain-containing protein KCTD18 (422 aa).

The region spanning 12 to 80 (DILRLNVGGC…YLHGEVHIPT (69 aa)) is the BTB domain. Disordered stretches follow at residues 289 to 357 (VKNS…THLP) and 376 to 422 (LRRT…DQTK). Pro residues predominate over residues 396–406 (PAGPPEPPPDA). Polar residues predominate over residues 413 to 422 (WTENGQDQTK).

The polypeptide is BTB/POZ domain-containing protein KCTD18 (KCTD18) (Bos taurus (Bovine)).